We begin with the raw amino-acid sequence, 257 residues long: Phosphonates import ATP-binding protein PhnC 1 (257 aa).

The ABC transporter domain occupies 2-246 (IELKNVSKVY…VFKDIYGRPL (245 aa)). Residue 35-42 (GLSGAGKS) coordinates ATP.

The protein belongs to the ABC transporter superfamily. Phosphonates importer (TC 3.A.1.9.1) family. In terms of assembly, the complex is composed of two ATP-binding proteins (PhnC), two transmembrane proteins (PhnE) and a solute-binding protein (PhnD).

The protein localises to the cell membrane. The enzyme catalyses phosphonate(out) + ATP + H2O = phosphonate(in) + ADP + phosphate + H(+). Its function is as follows. Part of the ABC transporter complex PhnCDE involved in phosphonates import. Responsible for energy coupling to the transport system. This Halalkalibacterium halodurans (strain ATCC BAA-125 / DSM 18197 / FERM 7344 / JCM 9153 / C-125) (Bacillus halodurans) protein is Phosphonates import ATP-binding protein PhnC 1.